A 77-amino-acid polypeptide reads, in one-letter code: Translation initiation factor IF-1, chloroplastic (77 aa).

The S1-like domain maps to 1 to 72 (MNKQGLFQME…TKGRIVYRQR (72 aa)).

This sequence belongs to the IF-1 family. As to quaternary structure, component of the 30S ribosomal translation pre-initiation complex which assembles on the 30S ribosome in the order IF-2 and IF-3, IF-1 and N-formylmethionyl-tRNA(fMet); mRNA recruitment can occur at any time during PIC assembly.

The protein resides in the plastid. It is found in the chloroplast. Its function is as follows. One of the essential components for the initiation of protein synthesis. Stabilizes the binding of IF-2 and IF-3 on the 30S subunit to which N-formylmethionyl-tRNA(fMet) subsequently binds. Helps modulate mRNA selection, yielding the 30S pre-initiation complex (PIC). Upon addition of the 50S ribosomal subunit IF-1, IF-2 and IF-3 are released leaving the mature 70S translation initiation complex. This is Translation initiation factor IF-1, chloroplastic from Nephroselmis olivacea (Green alga).